The sequence spans 275 residues: Hemin import ATP-binding protein HmuV (275 aa).

The 241-residue stretch at 2-242 (LKAAGIGVRL…EWIETGFGLQ (241 aa)) folds into the ABC transporter domain. Position 34-41 (34-41 (GPNGAGKS)) interacts with ATP.

Belongs to the ABC transporter superfamily. Heme (hemin) importer (TC 3.A.1.14.5) family. In terms of assembly, the complex is composed of two ATP-binding proteins (HmuV), two transmembrane proteins (HmuU) and a solute-binding protein (HmuT).

Its subcellular location is the cell inner membrane. Functionally, part of the ABC transporter complex HmuTUV involved in hemin import. Responsible for energy coupling to the transport system. The sequence is that of Hemin import ATP-binding protein HmuV from Gloeobacter violaceus (strain ATCC 29082 / PCC 7421).